A 463-amino-acid chain; its full sequence is Hexokinase-7 (463 aa).

The Hexokinase domain occupies 7-456; sequence AAAEQVVAAL…SGLGAALIAA (450 aa). The hexokinase small subdomain stretch occupies residues 62–199; it reads NGTEEGLFYA…GLDMRVSALI (138 aa). ADP contacts are provided by Gly-76, Thr-77, and Asn-78. 4 residues coordinate D-glucose: Thr-165, Lys-166, Asn-200, and Asp-201. Residues 200–445 are hexokinase large subdomain; the sequence is NDTVGTLAAG…KSVAVKLAND (246 aa). Thr-224 serves as a coordination point for ADP. D-glucose contacts are provided by Asn-227, Glu-255, and Glu-286. Gly-410 lines the ADP pocket.

This sequence belongs to the hexokinase family. Expressed in roots, leaves, flowers, immature seeds and seed coat.

The protein localises to the cytoplasm. It carries out the reaction a D-hexose + ATP = a D-hexose 6-phosphate + ADP + H(+). It catalyses the reaction D-fructose + ATP = D-fructose 6-phosphate + ADP + H(+). The catalysed reaction is D-glucose + ATP = D-glucose 6-phosphate + ADP + H(+). Its pathway is carbohydrate metabolism; hexose metabolism. The protein operates within carbohydrate degradation; glycolysis; D-glyceraldehyde 3-phosphate and glycerone phosphate from D-glucose: step 1/4. Fructose and glucose phosphorylating enzyme. Functions in sugar signaling via a glycolysis-dependent manner under aerobic conditions, but its signaling role is suppressed when oxygen is deficient. The polypeptide is Hexokinase-7 (HXK7) (Oryza sativa subsp. japonica (Rice)).